Reading from the N-terminus, the 531-residue chain is Achacin (531 aa).

A signal peptide spans 1-22; that stretch reads MLLLNSALFILCLVCWLPGTSS. A propeptide spanning residues 23 to 29 is cleaved from the precursor; the sequence is SRVLTRR. N-linked (GlcNAc...) asparagine glycans are attached at residues N112, N150, N308, and N392.

The protein to A.kurodai aplysianin-A. Homodimer. In terms of tissue distribution, collar tissue.

Its function is as follows. Antibacterial glycoprotein. In Lissachatina fulica (Giant African land snail), this protein is Achacin.